A 134-amino-acid chain; its full sequence is D-xylulose reductase (134 aa).

Residues 31-115 (PATTTXYKXQ…XXQXDKIGRY (85 aa)) are disordered. Residues 50-59 (QTHEGTHQDV) are compositionally biased toward basic and acidic residues.

This sequence belongs to the zinc-containing alcohol dehydrogenase family.

It carries out the reaction xylitol + NAD(+) = D-xylulose + NADH + H(+). Activated by calcium and inhibited by zinc. The chain is D-xylulose reductase from Sus scrofa (Pig).